A 373-amino-acid polypeptide reads, in one-letter code: Histidinol-phosphate aminotransferase (373 aa).

K233 is subject to N6-(pyridoxal phosphate)lysine.

This sequence belongs to the class-II pyridoxal-phosphate-dependent aminotransferase family. Histidinol-phosphate aminotransferase subfamily. Homodimer. The cofactor is pyridoxal 5'-phosphate.

The catalysed reaction is L-histidinol phosphate + 2-oxoglutarate = 3-(imidazol-4-yl)-2-oxopropyl phosphate + L-glutamate. It functions in the pathway amino-acid biosynthesis; L-histidine biosynthesis; L-histidine from 5-phospho-alpha-D-ribose 1-diphosphate: step 7/9. This Nitratidesulfovibrio vulgaris (strain ATCC 29579 / DSM 644 / CCUG 34227 / NCIMB 8303 / VKM B-1760 / Hildenborough) (Desulfovibrio vulgaris) protein is Histidinol-phosphate aminotransferase.